Here is a 145-residue protein sequence, read N- to C-terminus: MILLKREVSTVNYKMLRRTPLMTIMDWEVTTLKVQNRSLKIHLLMVIKIQIDSVLREMIFHLIYEAQKQRAEDKKYKNKNKIKRKVIITITEICTFTIKYIRYIEVIILSHHFVIGFSFLLGLLRLGTYLMSSRPMQHMYINNFT.

The chain crosses the membrane as a helical span at residues 104 to 124 (IEVIILSHHFVIGFSFLLGLL).

The protein localises to the membrane. This is an uncharacterized protein from Saccharomyces cerevisiae (strain ATCC 204508 / S288c) (Baker's yeast).